The primary structure comprises 295 residues: Polyprenyl transferase dpmaC (295 aa).

Helical transmembrane passes span 39–59 (LFCVLAAYLFCGAGMVWNDWI), 84–104 (QAFVWMALQVIASCAVLHVML), 109–124 (VHVIPVMIASMLYPFL), 131–151 (KLHIYPQYMLAFTIAWPAIPG), 168–188 (YCLPLCTVVFFWTIYLNTAYS), 213–233 (LVLVALVCPILACLPLYLTQF), 237–257 (WLWVTWMGVWTAAFAVQLALF), and 271–291 (SNFVLGIWTIVVCSVELLLKA).

The protein belongs to the UbiA prenyltransferase family. Mg(2+) serves as cofactor.

It is found in the membrane. It participates in secondary metabolite biosynthesis; terpenoid biosynthesis. Polyprenyl transferase; part of the gene cluster that mediates the biosynthesis of the diterpenoid pyrones subglutinols A and B. The first step of the pathway is the synthesis of the alpha-pyrone moiety by the polyketide synthase dpmaA via condensation of one acetyl-CoA starter unit with 3 malonyl-CoA units and 2 methylations. The alpha-pyrone is then combined with geranylgeranyl pyrophosphate (GGPP) formed by the GGPP synthase dpmaD through the action of the prenyltransferase dpmaC to yield a linear alpha-pyrone diterpenoid. Subsequent steps in the diterpenoid pyrone biosynthetic pathway involve the decalin core formation, which is initiated by the epoxidation of the C10-C11 olefin by the FAD-dependent oxidoreductase dpmaE, and is followed by a cyclization cascade catalyzed by the terpene cyclase dpmaB. The dehydrogenase dpmaF is then involved in tetrahydrofuran (THF) ring formation at the C5 unit to complete the formation of subglutinols A and B. The protein is Polyprenyl transferase dpmaC of Metarhizium anisopliae (Entomophthora anisopliae).